A 137-amino-acid polypeptide reads, in one-letter code: MPSPKRTKFRKQHRGRLKGIATRSNSICFGKFALQALEPAWITARQIEAGRRAITRYARRGGKLWIRIFPDKPITARPAETRMGSGKGSPEYWVAIAKPGKILYEIGGVSENVAEAAMKIAAYKMPIRTAFIGININ.

The protein belongs to the universal ribosomal protein uL16 family. Part of the 50S ribosomal subunit.

The protein localises to the plastid. The sequence is that of Large ribosomal subunit protein uL16c from Aneura mirabilis (Parasitic liverwort).